The following is a 297-amino-acid chain: Mitochondrial thiamine pyrophosphate carrier 1 (297 aa).

Solcar repeat units follow at residues 13–94 (SHVF…TNAA), 102–195 (PPTI…IRAR), and 196–295 (WPET…LMRV). Transmembrane regions (helical) follow at residues 19-36 (LVSGAIAGLAARSAIAPL), 75-91 (IMYIIYGSVQFGTYSYT), 109-128 (LAGAITGMASSLCSYPFDVL), 163-187 (GLGGFFHGVATSMANVTVSTAAMFG), 203-219 (TAGAISGVISRTITFPL), and 270-287 (GIGLGLLKSVPNTAINLW).

Belongs to the mitochondrial carrier (TC 2.A.29) family.

It localises to the mitochondrion inner membrane. In terms of biological role, mitochondrial transporter that mediates uptake of thiamine pyrophosphate (ThPP) into mitochondria. This is Mitochondrial thiamine pyrophosphate carrier 1 (TPC1) from Vanderwaltozyma polyspora (strain ATCC 22028 / DSM 70294 / BCRC 21397 / CBS 2163 / NBRC 10782 / NRRL Y-8283 / UCD 57-17) (Kluyveromyces polysporus).